Reading from the N-terminus, the 328-residue chain is Aryl-hydrocarbon-interacting protein-like 1 (328 aa).

Residues 53 to 145 (KQVGQPMSII…DLDELQKEPQ (93 aa)) enclose the PPIase FKBP-type domain. 3 TPR repeats span residues 178–211 (VPLL…LRNL), 230–263 (NTLI…HPGI), and 264–297 (VKAY…EPSM).

Interacts with NUB1.

It localises to the cytoplasm. Its subcellular location is the nucleus. In terms of biological role, may be important in protein trafficking and/or protein folding and stabilization. This chain is Aryl-hydrocarbon-interacting protein-like 1 (Aipl1), found in Mus musculus (Mouse).